A 761-amino-acid polypeptide reads, in one-letter code: Zinc finger protein 287 (761 aa).

In terms of domain architecture, SCAN box spans 49–131 (RQNFRNFPYP…TLVEDLTQIL (83 aa)). The disordered stretch occupies residues 134–154 (EAPQNSTLSQDTPEEDPRGKH). One can recognise a KRAB domain in the interval 170 to 238 (MTFKDVAVDI…IKEILEGPSP (69 aa)). 14 C2H2-type zinc fingers span residues 368 to 390 (YKCN…QSTH), 396 to 418 (YECE…QRMH), 424 to 446 (YECH…QRIH), 452 to 474 (YKCD…QRTH), 480 to 502 (YKCL…QRVH), 508 to 530 (YICN…QKIH), 536 to 558 (YKCN…QRIH), 564 to 586 (YKCN…QTTH), 592 to 614 (YICN…HRTH), 620 to 642 (YKCS…QRIH), 648 to 670 (FKCN…QRIH), 676 to 698 (YKCN…QRTH), 704 to 726 (YKCN…QRIH), and 732 to 754 (YACR…QRVH).

It belongs to the krueppel C2H2-type zinc-finger protein family.

It localises to the nucleus. Functionally, may be involved in transcriptional regulation. The sequence is that of Zinc finger protein 287 from Homo sapiens (Human).